A 214-amino-acid chain; its full sequence is Transmembrane emp24 domain-containing protein p24delta10 (214 aa).

The first 24 residues, 1–24 (MFLQSQKLWTMLLILAIWSPISHS), serve as a signal peptide directing secretion. Topologically, residues 25-181 (LHFDLHSGRT…QDLNRSTNTK (157 aa)) are lumenal. Positions 34 to 149 (TKCIAEDIKS…VEVMEFEVKS (116 aa)) constitute a GOLD domain. Residues 164-177 (LRDREEEMQDLNRS) adopt a coiled-coil conformation. R167 carries the omega-N-methylated arginine modification. The N-linked (GlcNAc...) asparagine glycan is linked to N175. The helical transmembrane segment at 182-202 (MAWLSVLSFFVCIGVAGMQFL) threads the bilayer. Residues 203-214 (HLKTFFEKKKVI) are Cytoplasmic-facing. Residues 207-208 (FF) carry the COPII vesicle coat-binding motif. A COPI vesicle coat-binding motif is present at residues 207–214 (FFEKKKVI).

The protein belongs to the EMP24/GP25L family. In terms of assembly, probably oligomerizes with other members of the EMP24/GP25L family. Associates with the COPI vesicle coat (coatomer). Associates with the COPII vesicle coat (coatomer).

It localises to the endoplasmic reticulum membrane. The protein localises to the golgi apparatus. The protein resides in the cis-Golgi network membrane. Its subcellular location is the golgi stack membrane. In terms of biological role, involved in vesicular protein trafficking. Mainly functions in the early secretory pathway. Thought to act as cargo receptor at the lumenal side for incorporation of secretory cargo molecules into transport vesicles and to be involved in vesicle coat formation at the cytoplasmic side. The polypeptide is Transmembrane emp24 domain-containing protein p24delta10 (Arabidopsis thaliana (Mouse-ear cress)).